The following is a 331-amino-acid chain: tRNA(Ile)-lysidine synthase (331 aa).

29-34 (SGGPDS) serves as a coordination point for ATP.

It belongs to the tRNA(Ile)-lysidine synthase family.

Its subcellular location is the cytoplasm. It carries out the reaction cytidine(34) in tRNA(Ile2) + L-lysine + ATP = lysidine(34) in tRNA(Ile2) + AMP + diphosphate + H(+). In terms of biological role, ligates lysine onto the cytidine present at position 34 of the AUA codon-specific tRNA(Ile) that contains the anticodon CAU, in an ATP-dependent manner. Cytidine is converted to lysidine, thus changing the amino acid specificity of the tRNA from methionine to isoleucine. This chain is tRNA(Ile)-lysidine synthase, found in Chlorobaculum tepidum (strain ATCC 49652 / DSM 12025 / NBRC 103806 / TLS) (Chlorobium tepidum).